Reading from the N-terminus, the 153-residue chain is Small ribosomal subunit protein bS16 (153 aa).

This sequence belongs to the bacterial ribosomal protein bS16 family.

The polypeptide is Small ribosomal subunit protein bS16 (Leifsonia xyli subsp. xyli (strain CTCB07)).